The chain runs to 66 residues: Large ribosomal subunit protein eL29 (66 aa).

The span at 1-14 shows a compositional bias: polar residues; that stretch reads MAKSKNSTNKNQIS. The tract at residues 1–66 is disordered; that stretch reads MAKSKNSTNK…KNLEKKVNKE (66 aa). Basic residues predominate over residues 15–31; sequence KSHRNGIKKPKDHRHIS. The segment covering 47 to 66 has biased composition (basic and acidic residues); the sequence is IKNDPSIKKSKNLEKKVNKE.

It belongs to the eukaryotic ribosomal protein eL29 family.

It localises to the cytoplasm. This chain is Large ribosomal subunit protein eL29 (RPL29), found in Tetrahymena thermophila.